Here is a 313-residue protein sequence, read N- to C-terminus: Urease accessory protein UreD (313 aa).

The interval 1–30 is disordered; sequence MTDLSFPGQAASPGEGAGQTPSGGSGHRFD. The span at 15–26 shows a compositional bias: gly residues; the sequence is EGAGQTPSGGSG.

It belongs to the UreD family. As to quaternary structure, ureD, UreF and UreG form a complex that acts as a GTP-hydrolysis-dependent molecular chaperone, activating the urease apoprotein by helping to assemble the nickel containing metallocenter of UreC. The UreE protein probably delivers the nickel.

The protein resides in the cytoplasm. Its function is as follows. Required for maturation of urease via the functional incorporation of the urease nickel metallocenter. The sequence is that of Urease accessory protein UreD from Chromohalobacter salexigens (strain ATCC BAA-138 / DSM 3043 / CIP 106854 / NCIMB 13768 / 1H11).